Reading from the N-terminus, the 454-residue chain is UPF0210 protein EUBREC_1565 (454 aa).

It belongs to the UPF0210 family. In terms of assembly, homodimer.

This Agathobacter rectalis (strain ATCC 33656 / DSM 3377 / JCM 17463 / KCTC 5835 / VPI 0990) (Eubacterium rectale) protein is UPF0210 protein EUBREC_1565.